The chain runs to 174 residues: UPF0664 stress-induced protein C29B12.11c (174 aa).

The segment at 147–174 is disordered; the sequence is HLDPLPPYHRPSSSQDQPPHYEEAVNKS. Positions 165-174 are enriched in basic and acidic residues; the sequence is PHYEEAVNKS.

Belongs to the UPF0664 family.

It localises to the cytoplasm. It is found in the nucleus. This Schizosaccharomyces pombe (strain 972 / ATCC 24843) (Fission yeast) protein is UPF0664 stress-induced protein C29B12.11c.